Consider the following 119-residue polypeptide: Ghilanten (119 aa).

At Gln-1 the chain carries Pyrrolidone carboxylic acid. Intrachain disulfides connect Cys-8–Cys-19, Cys-13–Cys-26, Cys-28–Cys-48, Cys-33–Cys-51, Cys-37–Cys-53, Cys-62–Cys-73, Cys-67–Cys-80, Cys-82–Cys-103, Cys-88–Cys-106, and Cys-92–Cys-108. The region spanning 28 to 53 (CPEVRCRVYCSHGFQRSRYGCEVCRC) is the Antistasin-like 1 domain. In terms of domain architecture, Antistasin-like 2 spans 83-108 (KIDINCRKTCPNGLKRDKLGCEYCEC). Heparin-binding positions include 97–100 (KRDK) and 111–118 (KRKLVPRL).

Belongs to the protease inhibitor I15 (antistasin) family.

The protein resides in the secreted. Functionally, this highly disulfide-bonded protein is a potent inhibitor of factor Xa. May have therapeutic utility as an anticoagulant. Also exhibits a strong metastatic activity. This chain is Ghilanten, found in Haementeria ghilianii (Amazon leech).